The primary structure comprises 133 residues: Major seminal plasma glycoprotein PSP-I (133 aa).

A signal peptide spans 1–24 (MKLGSAIPWALLFSTATLISTGWG). Cysteines 30 and 51 form a disulfide. The CUB domain maps to 30–130 (CGGRLTDDYG…SPYEIIFLRD (101 aa)). An N-linked (GlcNAc...) (complex) asparagine glycan is attached at N71. C74 and C95 are joined by a disulfide.

In terms of assembly, monomer or heterodimer with PSP-II (depending on the type of glycosylation of PSP-I). Seminal plasma or sperm.

It is found in the secreted. Functionally, not yet identified, major porcine seminal plasma protein. Can bind soybean trypsin inhibitor after deglycosylation. The chain is Major seminal plasma glycoprotein PSP-I from Sus scrofa (Pig).